A 491-amino-acid polypeptide reads, in one-letter code: Ketol-acid reductoisomerase (NADP(+)) (491 aa).

The KARI N-terminal Rossmann domain maps to 15 to 208 (AQLGKCRFMG…GGHRAGVLES (194 aa)). Residues 45–48 (CGAQ), R68, R76, S78, and 108–110 (DKQ) each bind NADP(+). H132 is a catalytic residue. G158 contributes to the NADP(+) binding site. 2 KARI C-terminal knotted domains span residues 209-344 (SFVA…TAPQ) and 345-484 (YEGK…MTDM). Mg(2+)-binding residues include D217, E221, E389, and E393. S414 contributes to the substrate binding site.

Belongs to the ketol-acid reductoisomerase family. The cofactor is Mg(2+).

It carries out the reaction (2R)-2,3-dihydroxy-3-methylbutanoate + NADP(+) = (2S)-2-acetolactate + NADPH + H(+). It catalyses the reaction (2R,3R)-2,3-dihydroxy-3-methylpentanoate + NADP(+) = (S)-2-ethyl-2-hydroxy-3-oxobutanoate + NADPH + H(+). It functions in the pathway amino-acid biosynthesis; L-isoleucine biosynthesis; L-isoleucine from 2-oxobutanoate: step 2/4. It participates in amino-acid biosynthesis; L-valine biosynthesis; L-valine from pyruvate: step 2/4. Functionally, involved in the biosynthesis of branched-chain amino acids (BCAA). Catalyzes an alkyl-migration followed by a ketol-acid reduction of (S)-2-acetolactate (S2AL) to yield (R)-2,3-dihydroxy-isovalerate. In the isomerase reaction, S2AL is rearranged via a Mg-dependent methyl migration to produce 3-hydroxy-3-methyl-2-ketobutyrate (HMKB). In the reductase reaction, this 2-ketoacid undergoes a metal-dependent reduction by NADPH to yield (R)-2,3-dihydroxy-isovalerate. The protein is Ketol-acid reductoisomerase (NADP(+)) of Escherichia coli (strain 55989 / EAEC).